Reading from the N-terminus, the 200-residue chain is Regulator of free ubiquitin chains 1 (200 aa).

Belongs to the RFU1 family. Interacts with BRO1 and DOA4.

It is found in the endosome. Inhibitor of the DOA4 deubiquitinase involved in the regulation of protein degradation by the proteasome and maintenance of a normal level of free ubiquitin. In Saccharomyces cerevisiae (strain RM11-1a) (Baker's yeast), this protein is Regulator of free ubiquitin chains 1 (RFU1).